The chain runs to 586 residues: Putative ABC transporter ATP-binding protein MG187 homolog (586 aa).

The ABC transporter domain occupies 13–464; sequence IEFKNIVVDF…PANEFVATFL (452 aa). 45 to 52 is an ATP binding site; sequence GPSGCGKT.

This sequence belongs to the ABC transporter superfamily.

The polypeptide is Putative ABC transporter ATP-binding protein MG187 homolog (Mycoplasma pneumoniae (strain ATCC 29342 / M129 / Subtype 1) (Mycoplasmoides pneumoniae)).